Reading from the N-terminus, the 807-residue chain is Nucleolar complex protein 3 homolog (807 aa).

Disordered stretches follow at residues 27–93 (KLKN…DMMD) and 167–191 (EKPV…EVIE). The span at 40 to 51 (KKYRKEQRKLRQ) shows a compositional bias: basic residues. Positions 52–78 (AVKDAVSKKPIPLEDPKSKRPVKRMER) are enriched in basic and acidic residues. Composition is skewed to acidic residues over residues 79–93 (EEDE…DMMD) and 174–190 (QQEE…EEVI). Residue Lys332 forms a Glycyl lysine isopeptide (Lys-Gly) (interchain with G-Cter in SUMO2) linkage. Residues 449 to 489 (FKEKRKTLSRMQRKWKKAEEKLERELREAEASESTEKKLKL) adopt a coiled-coil conformation.

Belongs to the CBF/MAK21 family.

The protein localises to the nucleus. It localises to the nucleolus. Its subcellular location is the nucleus speckle. May be required for adipogenesis. This chain is Nucleolar complex protein 3 homolog (Noc3l), found in Mus musculus (Mouse).